A 562-amino-acid polypeptide reads, in one-letter code: Glutamate--tRNA ligase (562 aa).

The 'HIGH' region signature appears at 90-100 (PNPSGLLHIGH).

Belongs to the class-I aminoacyl-tRNA synthetase family. Glutamate--tRNA ligase type 2 subfamily.

It localises to the cytoplasm. The enzyme catalyses tRNA(Glu) + L-glutamate + ATP = L-glutamyl-tRNA(Glu) + AMP + diphosphate. In terms of biological role, catalyzes the attachment of glutamate to tRNA(Glu) in a two-step reaction: glutamate is first activated by ATP to form Glu-AMP and then transferred to the acceptor end of tRNA(Glu). The chain is Glutamate--tRNA ligase from Nanoarchaeum equitans (strain Kin4-M).